A 306-amino-acid chain; its full sequence is Probable arylamine N-acetyltransferase 3 (306 aa).

Cys-75 functions as the Acyl-thioester intermediate in the catalytic mechanism. Residues His-115 and Asp-130 contribute to the active site.

This sequence belongs to the arylamine N-acetyltransferase family.

The catalysed reaction is an arylamine + acetyl-CoA = an N-acetylarylamine + CoA. The chain is Probable arylamine N-acetyltransferase 3 from Dictyostelium discoideum (Social amoeba).